The chain runs to 485 residues: Peroxisomal catalase (485 aa).

Catalysis depends on residues His-53 and Asn-126. Position 336 (Tyr-336) interacts with heme.

It belongs to the catalase family. As to quaternary structure, homotetramer. Heme serves as cofactor.

The protein localises to the peroxisome matrix. It carries out the reaction 2 H2O2 = O2 + 2 H2O. Catalyzes the degradation of hydrogen peroxide (H(2)O(2)) generated by peroxisomal oxidases to water and oxygen, thereby protecting cells from the toxic effects of hydrogen peroxide. The protein is Peroxisomal catalase (POX9) of Candida tropicalis (Yeast).